A 271-amino-acid polypeptide reads, in one-letter code: Ribosomal RNA small subunit methyltransferase A (271 aa).

Positions 18, 20, 45, 66, 91, and 113 each coordinate S-adenosyl-L-methionine.

The protein belongs to the class I-like SAM-binding methyltransferase superfamily. rRNA adenine N(6)-methyltransferase family. RsmA subfamily.

The protein resides in the cytoplasm. The enzyme catalyses adenosine(1518)/adenosine(1519) in 16S rRNA + 4 S-adenosyl-L-methionine = N(6)-dimethyladenosine(1518)/N(6)-dimethyladenosine(1519) in 16S rRNA + 4 S-adenosyl-L-homocysteine + 4 H(+). In terms of biological role, specifically dimethylates two adjacent adenosines (A1518 and A1519) in the loop of a conserved hairpin near the 3'-end of 16S rRNA in the 30S particle. May play a critical role in biogenesis of 30S subunits. This is Ribosomal RNA small subunit methyltransferase A from Baumannia cicadellinicola subsp. Homalodisca coagulata.